A 293-amino-acid polypeptide reads, in one-letter code: 4-hydroxy-tetrahydrodipicolinate synthase (293 aa).

Pyruvate is bound at residue T44. Y132 (proton donor/acceptor) is an active-site residue. K161 functions as the Schiff-base intermediate with substrate in the catalytic mechanism. Position 203 (I203) interacts with pyruvate.

Belongs to the DapA family. In terms of assembly, homotetramer; dimer of dimers.

The protein resides in the cytoplasm. It carries out the reaction L-aspartate 4-semialdehyde + pyruvate = (2S,4S)-4-hydroxy-2,3,4,5-tetrahydrodipicolinate + H2O + H(+). Its pathway is amino-acid biosynthesis; L-lysine biosynthesis via DAP pathway; (S)-tetrahydrodipicolinate from L-aspartate: step 3/4. Catalyzes the condensation of (S)-aspartate-beta-semialdehyde [(S)-ASA] and pyruvate to 4-hydroxy-tetrahydrodipicolinate (HTPA). In Sulfurihydrogenibium sp. (strain YO3AOP1), this protein is 4-hydroxy-tetrahydrodipicolinate synthase.